A 417-amino-acid chain; its full sequence is Valine--pyruvate aminotransferase (417 aa).

An N6-(pyridoxal phosphate)lysine modification is found at lysine 249.

The protein belongs to the class-I pyridoxal-phosphate-dependent aminotransferase family. As to quaternary structure, homodimer. It depends on pyridoxal 5'-phosphate as a cofactor.

The protein localises to the cytoplasm. It carries out the reaction L-valine + pyruvate = 3-methyl-2-oxobutanoate + L-alanine. Involved in the biosynthesis of alanine. This chain is Valine--pyruvate aminotransferase (avtA), found in Escherichia coli (strain K12).